The following is a 156-amino-acid chain: Transcriptional repressor NrdR (156 aa).

The segment at 3–34 (CPFCQHDDTQVLDTRISEEGDSIRRRRRCVSC) is a zinc-finger region. The ATP-cone domain maps to 49 to 139 (PVIVKKNGSR…VYKSFEDVAE (91 aa)).

Belongs to the NrdR family. Zn(2+) is required as a cofactor.

Functionally, negatively regulates transcription of bacterial ribonucleotide reductase nrd genes and operons by binding to NrdR-boxes. This Herminiimonas arsenicoxydans protein is Transcriptional repressor NrdR.